Here is a 117-residue protein sequence, read N- to C-terminus: Large ribosomal subunit protein bL20 (117 aa).

Belongs to the bacterial ribosomal protein bL20 family.

Binds directly to 23S ribosomal RNA and is necessary for the in vitro assembly process of the 50S ribosomal subunit. It is not involved in the protein synthesizing functions of that subunit. The sequence is that of Large ribosomal subunit protein bL20 from Glaesserella parasuis serovar 5 (strain SH0165) (Haemophilus parasuis).